Here is a 178-residue protein sequence, read N- to C-terminus: Platelet inhibitor triplatin-2 (178 aa).

Positions 1–18 are cleaved as a signal peptide; it reads MKMIISLTFLGILMLAFA. Cystine bridges form between cysteine 25–cysteine 134, cysteine 60–cysteine 178, and cysteine 90–cysteine 106.

The protein belongs to the calycin superfamily. Triabin family. As to expression, expressed in salivary glands.

The protein localises to the secreted. Inhibits platelet aggregation and vasoconstriction through binding to distinct eicosanoids involved in inflammation (acts as a scavenger), and has a role in inhibiting host innate immunity by impairing platelet-assisted formation of neutrophil extracellular traps (NETs). Inhibits platelet aggregation by collagen, and low doses of thromboxane A2 mimetic (TXA2 mimetic), and arachidonic acid (AA) without affecting aggregation induced by ADP, convulxin (GP6 agonist), and PMA. Binds to TXA2, TXB2, prostaglandine H2 mimetic (PGH2 mimetic), PGJ2, and PGF2alpha. Binding is not observed to leukotrienes, AA, and biogenic amines (PGE1, 5(S)-HETE, 12(S)-HETE, 20-HETE, norepinephrine, epinephrine, serotonin, LTC4 and ADP). Induces relaxation of aorta rat previously contracted with TXA2 mimetic. Moreover, it also impairs platelet-assisted formation of neutrophil extracellular traps (NETs). NETs are web-like structures of DNA and proteins that play an important role in killing of pathogens. In addition, NETs are implicated in thrombus formation. In vivo, this protein exhibits antithrombotic activity in two distinct mice models that are highly dependent on platelets. It is noteworthy that it inhibits thrombosis without promoting excessive bleeding. The chain is Platelet inhibitor triplatin-2 from Triatoma infestans (Assassin bug).